The primary structure comprises 138 residues: Large ribosomal subunit protein bL17 (138 aa).

Belongs to the bacterial ribosomal protein bL17 family. As to quaternary structure, part of the 50S ribosomal subunit. Contacts protein L32.

This chain is Large ribosomal subunit protein bL17, found in Methylorubrum extorquens (strain CM4 / NCIMB 13688) (Methylobacterium extorquens).